Consider the following 142-residue polypeptide: Universal stress protein C (142 aa).

The protein belongs to the universal stress protein A family.

Its subcellular location is the cytoplasm. In terms of biological role, required for resistance to DNA-damaging agents. The sequence is that of Universal stress protein C (uspC) from Salmonella typhimurium (strain LT2 / SGSC1412 / ATCC 700720).